Reading from the N-terminus, the 129-residue chain is Small ribosomal subunit protein uS11 (129 aa).

Belongs to the universal ribosomal protein uS11 family. Part of the 30S ribosomal subunit. Interacts with proteins S7 and S18. Binds to IF-3.

Its function is as follows. Located on the platform of the 30S subunit, it bridges several disparate RNA helices of the 16S rRNA. Forms part of the Shine-Dalgarno cleft in the 70S ribosome. This chain is Small ribosomal subunit protein uS11, found in Vibrio atlanticus (strain LGP32) (Vibrio splendidus (strain Mel32)).